The primary structure comprises 171 residues: Ribosome maturation factor RimM (171 aa).

A PRC barrel domain is found at 97–170; sequence EGEYYYHEVI…QVTIHVMEGL (74 aa).

This sequence belongs to the RimM family. As to quaternary structure, binds ribosomal protein uS19.

It localises to the cytoplasm. Its function is as follows. An accessory protein needed during the final step in the assembly of 30S ribosomal subunit, possibly for assembly of the head region. Essential for efficient processing of 16S rRNA. May be needed both before and after RbfA during the maturation of 16S rRNA. It has affinity for free ribosomal 30S subunits but not for 70S ribosomes. In Bacillus cytotoxicus (strain DSM 22905 / CIP 110041 / 391-98 / NVH 391-98), this protein is Ribosome maturation factor RimM.